We begin with the raw amino-acid sequence, 935 residues long: Protein translocase subunit SecA (935 aa).

Residues Gln-86, 104 to 108, and Asp-494 contribute to the ATP site; that span reads GEGKT. The tract at residues 879–935 is disordered; that stretch reads EQAATARAQQHSSAAVAAPEQGATQRGAFGQRVSAADDAAPANRAERRAQKKPTKRH.

The protein belongs to the SecA family. As to quaternary structure, monomer and homodimer. Part of the essential Sec protein translocation apparatus which comprises SecA, SecYEG and auxiliary proteins SecDF. Other proteins may also be involved.

It localises to the cell membrane. The protein resides in the cytoplasm. It carries out the reaction ATP + H2O + cellular proteinSide 1 = ADP + phosphate + cellular proteinSide 2.. Its function is as follows. Part of the Sec protein translocase complex. Interacts with the SecYEG preprotein conducting channel. Has a central role in coupling the hydrolysis of ATP to the transfer of proteins into and across the cell membrane, serving as an ATP-driven molecular motor driving the stepwise translocation of polypeptide chains across the membrane. The protein is Protein translocase subunit SecA of Leifsonia xyli subsp. xyli (strain CTCB07).